The primary structure comprises 227 residues: Cytochrome c oxidase subunit 2 (227 aa).

Over 1 to 14 the chain is Mitochondrial intermembrane; that stretch reads MAYPFQLGLQDATS. The chain crosses the membrane as a helical span at residues 15 to 45; that stretch reads PIMEELTNFHDHTLMIVFLISSLVLYIISLM. Over 46-59 the chain is Mitochondrial matrix; sequence LTTKLTHTSTMDAQ. Residues 60–87 traverse the membrane as a helical segment; it reads EVETIWTILPAVILILIALPSLRILYMM. Residues 88–227 are Mitochondrial intermembrane-facing; the sequence is DEINNPVLTV…YFENWSASMI (140 aa). Residues His161, Cys196, Glu198, Cys200, His204, and Met207 each coordinate Cu cation. Position 198 (Glu198) interacts with Mg(2+). Tyr218 carries the post-translational modification Phosphotyrosine.

Belongs to the cytochrome c oxidase subunit 2 family. As to quaternary structure, component of the cytochrome c oxidase (complex IV, CIV), a multisubunit enzyme composed of 14 subunits. The complex is composed of a catalytic core of 3 subunits MT-CO1, MT-CO2 and MT-CO3, encoded in the mitochondrial DNA, and 11 supernumerary subunits COX4I, COX5A, COX5B, COX6A, COX6B, COX6C, COX7A, COX7B, COX7C, COX8 and NDUFA4, which are encoded in the nuclear genome. The complex exists as a monomer or a dimer and forms supercomplexes (SCs) in the inner mitochondrial membrane with NADH-ubiquinone oxidoreductase (complex I, CI) and ubiquinol-cytochrome c oxidoreductase (cytochrome b-c1 complex, complex III, CIII), resulting in different assemblies (supercomplex SCI(1)III(2)IV(1) and megacomplex MCI(2)III(2)IV(2)). Found in a complex with TMEM177, COA6, COX18, COX20, SCO1 and SCO2. Interacts with TMEM177 in a COX20-dependent manner. Interacts with COX20. Interacts with COX16. It depends on Cu cation as a cofactor.

The protein resides in the mitochondrion inner membrane. It carries out the reaction 4 Fe(II)-[cytochrome c] + O2 + 8 H(+)(in) = 4 Fe(III)-[cytochrome c] + 2 H2O + 4 H(+)(out). Component of the cytochrome c oxidase, the last enzyme in the mitochondrial electron transport chain which drives oxidative phosphorylation. The respiratory chain contains 3 multisubunit complexes succinate dehydrogenase (complex II, CII), ubiquinol-cytochrome c oxidoreductase (cytochrome b-c1 complex, complex III, CIII) and cytochrome c oxidase (complex IV, CIV), that cooperate to transfer electrons derived from NADH and succinate to molecular oxygen, creating an electrochemical gradient over the inner membrane that drives transmembrane transport and the ATP synthase. Cytochrome c oxidase is the component of the respiratory chain that catalyzes the reduction of oxygen to water. Electrons originating from reduced cytochrome c in the intermembrane space (IMS) are transferred via the dinuclear copper A center (CU(A)) of subunit 2 and heme A of subunit 1 to the active site in subunit 1, a binuclear center (BNC) formed by heme A3 and copper B (CU(B)). The BNC reduces molecular oxygen to 2 water molecules using 4 electrons from cytochrome c in the IMS and 4 protons from the mitochondrial matrix. This chain is Cytochrome c oxidase subunit 2, found in Rattus norvegicus (Rat).